A 259-amino-acid polypeptide reads, in one-letter code: Probable ABC transporter permease protein RBE_1340 (259 aa).

Helical transmembrane passes span 25 to 45 (IFSL…SLII), 49 to 69 (LFIG…SGAV), 148 to 168 (VIAA…IGVM), 195 to 215 (PIDV…ISII), and 237 to 257 (AVVN…ELFF).

Belongs to the MlaE permease family.

Its subcellular location is the cell inner membrane. Functionally, could be part of an ABC transporter complex. The protein is Probable ABC transporter permease protein RBE_1340 of Rickettsia bellii (strain RML369-C).